The primary structure comprises 831 residues: MTLTRRDLIKAQAAATAAAAAGLPVSALAQPVTGGAEALRIRWSKAPCRFCGTGCGVMVGTRDGQVVATHGDTQAEVNRGLNCVKGYFLSKIMYGEDRLTTPLLRMKDGVYHKEGEFAPVSWDEAFDVMAAQAKRVLKEKGPKAVGMFGSGQWTIWEGYAASKLMRAGFRSNNLDPNARHCMASAATAFMRTFGMDEPMGCYDDFEAADAFVLWGSNMAEMHPILWSRLTDRRLSHEHVRVAVLSTFTHRSMDLADTPIIFRPGTDLAILNYIAHHIISTGRVNRDFVDRHTNFALGATDIGYGLRPEHQLQLAAKGAADAGAMTPTDFETFAALVSEYTLEKAAEISGVEPALLEELAELYADPDRKVMSLWTMGFNQHVRGVWANHMVYNLHLLTGKISEPGNSPFSLTGQPSACGTAREVGTFAHRLPADMVVTNPEHRAHAEEIWKLPAGLLPDWVGAHAVEQDRKLHDGEINFYWVQVNNNMQAAPNIDQETYPGYRNPENFIVVSDAYPTVTGRCADLVLPAAMWVEKEGAYGNAERRTHFWHQLVEAPGEARSDLWQLMEFSKRFTTDEVWPEEILSAAPAYRGKTLFEVLFANGSVDRFPASDVNPDHANHEAALFGFYPQKGLFEEYAAFGRGHGHDLAPFDTYHEVRGLRWPVVEGEETRWRYREGFDPYVKPGEGLRFYGKPDGRAVILGVPYEPPAESPDEEFGFWLVTGRVLEHWHSGSMTLRVPELYKAFPGAVCFMHPEDARSRGLNRGSEVRVISRRGEIRTRLETRGRNRMPRGVVFVPWFDASQLINKVTLDANDPISRQTDFKKCAVKIEAV.

A signal peptide (tat-type signal) is located at residues 1 to 29; that stretch reads MTLTRRDLIKAQAAATAAAAAGLPVSALA. The 4Fe-4S Mo/W bis-MGD-type domain maps to 41–97; sequence IRWSKAPCRFCGTGCGVMVGTRDGQVVATHGDTQAEVNRGLNCVKGYFLSKIMYGED. The [4Fe-4S] cluster site is built by cysteine 48, cysteine 51, cysteine 55, and cysteine 83. Mo-bis(molybdopterin guanine dinucleotide) is bound by residues lysine 85, glutamine 152, asparagine 177, cysteine 181, 214–221, 245–249, 264–266, methionine 375, glutamine 379, asparagine 485, 511–512, lysine 534, aspartate 561, and 721–730; these read WGSNMAEM, STFTH, GTD, SD, and TGRVLEHWHS. A substrate-binding site is contributed by tryptophan 797. Mo-bis(molybdopterin guanine dinucleotide) is bound by residues asparagine 805 and lysine 822.

It belongs to the prokaryotic molybdopterin-containing oxidoreductase family. NasA/NapA/NarB subfamily. In terms of assembly, component of the periplasmic nitrate reductase NapAB complex composed of NapA and NapB. Requires [4Fe-4S] cluster as cofactor. Mo-bis(molybdopterin guanine dinucleotide) is required as a cofactor. Post-translationally, predicted to be exported by the Tat system. The position of the signal peptide cleavage has not been experimentally proven.

It localises to the periplasm. The enzyme catalyses 2 Fe(II)-[cytochrome] + nitrate + 2 H(+) = 2 Fe(III)-[cytochrome] + nitrite + H2O. Its function is as follows. Catalytic subunit of the periplasmic nitrate reductase complex NapAB. Receives electrons from NapB and catalyzes the reduction of nitrate to nitrite. This Cereibacter sphaeroides (strain ATCC 17023 / DSM 158 / JCM 6121 / CCUG 31486 / LMG 2827 / NBRC 12203 / NCIMB 8253 / ATH 2.4.1.) (Rhodobacter sphaeroides) protein is Periplasmic nitrate reductase.